A 60-amino-acid chain; its full sequence is Small ribosomal subunit protein bS21 (60 aa).

The disordered stretch occupies residues 41–60; it reads PEEKRKRKAIARRRQRSRRR. Basic residues predominate over residues 45–60; sequence RKRKAIARRRQRSRRR.

The protein belongs to the bacterial ribosomal protein bS21 family.

This is Small ribosomal subunit protein bS21 from Gloeothece citriformis (strain PCC 7424) (Cyanothece sp. (strain PCC 7424)).